The sequence spans 657 residues: Sodium/glucose cotransporter 4 (657 aa).

Over 1-24 (MPASPEPVTATPEPEEVPAKFTLE) the chain is Extracellular. The chain crosses the membrane as a helical span at residues 25 to 45 (AADIAVVVVYFVFVLAVGIWS). Residues 46 to 79 (SIRANRGTVGGYFLAGRSMTWWPIGASLMSSNVG) are Cytoplasmic-facing. A helical membrane pass occupies residues 80–100 (SGLFIGLAGTGAAGGLAVGGF). Residues 101 to 104 (EWNA) lie on the Extracellular side of the membrane. The chain crosses the membrane as a helical span at residues 105–125 (AWVLIALGWIFVPVYISAGVV). The Cytoplasmic segment spans residues 126–147 (TMPEYLRKRFGGQRIRIYMSVL). Residues 148–168 (SLILYILTKISTDIFSGALFI) form a helical membrane-spanning segment. Residues 169 to 180 (QVSLGWDLYLST) are Extracellular-facing. Residues 181-201 (VILLAVTALYTIAGGLTAVIY) traverse the membrane as a helical segment. The Cytoplasmic segment spans residues 202–207 (TDALQT). Residues 208–228 (VIMVIGAFVLMFIAFDKVGWY) form a helical membrane-spanning segment. The Extracellular portion of the chain corresponds to 229–265 (EGLLVQYEKAAPALTVPNTTCHLPRSDAFHIFRDPVT). Residue Asn-246 is glycosylated (N-linked (GlcNAc...) asparagine). The helical transmembrane segment at 266–286 (GDIPWPGLIFGLTVLATWVWC) threads the bilayer. At 287–307 (TDQVIVQRSLSAKNLSHAKAG) the chain is on the cytoplasmic side. The helical transmembrane segment at 308 to 328 (SVLGGYLKVFPMFFVVMPGMI) threads the bilayer. The Extracellular segment spans residues 329-373 (SRALYPDEVACVDPDECQKICGAKVGCSNIAYPKLVVELMPVGMR). Residues 374-396 (GLMIAVMMAALMSSLTSIFNSSS) traverse the membrane as a helical segment. Over 397-417 (TLFTMDIWQRIRPRASEKELM) the chain is Cytoplasmic. The chain crosses the membrane as a helical span at residues 418–438 (VVGRVFILLLVALSIVWIPVI). Residues 439-451 (QTANSGQLFDYIQ) lie on the Extracellular side of the membrane. A helical membrane pass occupies residues 452–472 (AITSFLSPPITTVFIMAIFWG). The Cytoplasmic portion of the chain corresponds to 473–478 (RVNEQG). Residues 479–499 (AFWGLMVGLVVGMVRMIMEFV) form a helical membrane-spanning segment. The Extracellular portion of the chain corresponds to 500–520 (YGTPSCGETDLRPSLLKDVHY). The chain crosses the membrane as a helical span at residues 521–541 (LYFALILLALTVLIITAVSLC). The Cytoplasmic segment spans residues 542–636 (TAPIPEKHLV…SIEEDHMWKT (95 aa)). Residues 637 to 657 (VCNVNALILLTANVFLWGYFA) traverse the membrane as a helical segment.

It belongs to the sodium:solute symporter (SSF) (TC 2.A.21) family.

It is found in the membrane. Probable sodium-dependent sugar transporter. The sequence is that of Sodium/glucose cotransporter 4 (slc5a9) from Danio rerio (Zebrafish).